A 383-amino-acid chain; its full sequence is Glutaminyl-peptide cyclotransferase-like protein (383 aa).

Residues 1-25 (MPSGGRGRPRLQVGERSLLERPSPP) form a disordered region. Residues 35–57 (LLPQLLLALTVASVFYTIWRIWH) traverse the membrane as a helical segment. C168 and C192 are oxidised to a cystine. D187 serves as a coordination point for Zn(2+). Residue E226 is the Proton acceptor of the active site. E227 lines the Zn(2+) pocket. Catalysis depends on D270, which acts as the Proton acceptor. A Zn(2+)-binding site is contributed by H352.

This sequence belongs to the glutaminyl-peptide cyclotransferase family.

It localises to the golgi apparatus membrane. It carries out the reaction N-terminal L-glutaminyl-[peptide] = N-terminal 5-oxo-L-prolyl-[peptide] + NH4(+). In terms of biological role, responsible for the biosynthesis of pyroglutamyl peptides. The chain is Glutaminyl-peptide cyclotransferase-like protein (QPCTL) from Bos taurus (Bovine).